The chain runs to 102 residues: NADH-quinone oxidoreductase subunit K (102 aa).

A run of 3 helical transmembrane segments spans residues 6–26 (LEHG…GLMV), 30–50 (ILFV…AFVV), and 62–82 (VMFI…LAIL).

This sequence belongs to the complex I subunit 4L family. NDH-1 is composed of 13 different subunits. Subunits NuoA, H, J, K, L, M, N constitute the membrane sector of the complex.

Its subcellular location is the cell inner membrane. It catalyses the reaction a quinone + NADH + 5 H(+)(in) = a quinol + NAD(+) + 4 H(+)(out). NDH-1 shuttles electrons from NADH, via FMN and iron-sulfur (Fe-S) centers, to quinones in the respiratory chain. The immediate electron acceptor for the enzyme in this species is believed to be ubiquinone. Couples the redox reaction to proton translocation (for every two electrons transferred, four hydrogen ions are translocated across the cytoplasmic membrane), and thus conserves the redox energy in a proton gradient. The sequence is that of NADH-quinone oxidoreductase subunit K from Pseudomonas syringae pv. tomato (strain ATCC BAA-871 / DC3000).